We begin with the raw amino-acid sequence, 597 residues long: mRNA-capping enzyme (597 aa).

The segment at 1-212 (MAYNKIPPRW…DEDGKKDSEP (212 aa)) is TPase. The Tyrosine-protein phosphatase domain maps to 25-183 (LPLKTMLGPR…FRRYGDIEEA (159 aa)). The active-site Phosphocysteine intermediate is C126. The disordered stretch occupies residues 181-221 (EEAPPPPVLPDWCFEDEDEEDEDEDGKKDSEPGSSASFSKR). The span at 193–204 (CFEDEDEEDEDE) shows a compositional bias: acidic residues. Residues 229–597 (GAIFLEGITV…PPPKRLHRPT (369 aa)) are GTase. Residue K294 is the N6-GMP-lysine intermediate of the active site. GTP is bound by residues R299, R315, 343–345 (DGE), 458–460 (KWK), and 528–533 (RQRIDK). The interval 330 to 386 (RKDLRMHLSNTLLDGEMIIDKVNGQAVPRYLIYDIIKFNAQPVGDCDFNIRLQCIER) is interaction with POLR2A. The interval 573-597 (KRKYPLDPDTELMPPPPPKRLHRPT) is disordered.

The protein in the N-terminal section; belongs to the non-receptor class of the protein-tyrosine phosphatase family. This sequence in the C-terminal section; belongs to the eukaryotic GTase family. Interacts with SUPT5H and RNMT. Interacts with POLR2A (via C-terminus); this enhances guanylyltransferase activity. Binds (via GTase domain) to the elongating phosphorylated form of RNA polymerase II; can form direct interactions with the phosphorylated POLR2A C-terminal domain and indirect interactions via bound RNA.

Its subcellular location is the nucleus. The catalysed reaction is a 5'-end triphospho-ribonucleoside in mRNA + H2O = a 5'-end diphospho-ribonucleoside in mRNA + phosphate + H(+). The enzyme catalyses a 5'-end diphospho-ribonucleoside in mRNA + GTP + H(+) = a 5'-end (5'-triphosphoguanosine)-ribonucleoside in mRNA + diphosphate. With respect to regulation, RNA triphosphatase activity is inhibited by vanadate, iodoacetate and magnesium. Bifunctional mRNA-capping enzyme exhibiting RNA 5'-triphosphate monophosphatase activity in the N-terminal part and mRNA guanylyltransferase activity in the C-terminal part. Catalyzes the first two steps of cap formation: by removing the gamma-phosphate from the 5'-triphosphate end of nascent mRNA to yield a diphosphate end, and by transferring the GMP moiety of GTP to the 5'-diphosphate terminus of RNA via a covalent enzyme-GMP reaction intermediate. The chain is mRNA-capping enzyme (Rngtt) from Mus musculus (Mouse).